Consider the following 339-residue polypeptide: Glycerol-3-phosphate dehydrogenase [NAD(P)+] (339 aa).

Serine 15, tyrosine 16, histidine 36, and lysine 110 together coordinate NADPH. 3 residues coordinate sn-glycerol 3-phosphate: lysine 110, glycine 139, and threonine 141. NADPH is bound at residue alanine 143. Lysine 195, aspartate 248, serine 258, arginine 259, and asparagine 260 together coordinate sn-glycerol 3-phosphate. The active-site Proton acceptor is the lysine 195. Residue arginine 259 coordinates NADPH. Positions 283 and 285 each coordinate NADPH.

The protein belongs to the NAD-dependent glycerol-3-phosphate dehydrogenase family.

The protein resides in the cytoplasm. The enzyme catalyses sn-glycerol 3-phosphate + NAD(+) = dihydroxyacetone phosphate + NADH + H(+). It catalyses the reaction sn-glycerol 3-phosphate + NADP(+) = dihydroxyacetone phosphate + NADPH + H(+). Its pathway is membrane lipid metabolism; glycerophospholipid metabolism. Functionally, catalyzes the reduction of the glycolytic intermediate dihydroxyacetone phosphate (DHAP) to sn-glycerol 3-phosphate (G3P), the key precursor for phospholipid synthesis. The polypeptide is Glycerol-3-phosphate dehydrogenase [NAD(P)+] (Klebsiella pneumoniae subsp. pneumoniae (strain ATCC 700721 / MGH 78578)).